A 34-amino-acid polypeptide reads, in one-letter code: Photosystem II reaction center protein M (34 aa).

The chain crosses the membrane as a helical span at residues 5-25 (ILAFIATALFILIPTAFLLIL).

The protein belongs to the PsbM family. In terms of assembly, PSII is composed of 1 copy each of membrane proteins PsbA, PsbB, PsbC, PsbD, PsbE, PsbF, PsbH, PsbI, PsbJ, PsbK, PsbL, PsbM, PsbT, PsbX, PsbY, PsbZ, Psb30/Ycf12, at least 3 peripheral proteins of the oxygen-evolving complex and a large number of cofactors. It forms dimeric complexes.

Its subcellular location is the plastid. It localises to the chloroplast thylakoid membrane. Its function is as follows. One of the components of the core complex of photosystem II (PSII). PSII is a light-driven water:plastoquinone oxidoreductase that uses light energy to abstract electrons from H(2)O, generating O(2) and a proton gradient subsequently used for ATP formation. It consists of a core antenna complex that captures photons, and an electron transfer chain that converts photonic excitation into a charge separation. This subunit is found at the monomer-monomer interface. This is Photosystem II reaction center protein M from Anthoceros angustus (Hornwort).